The sequence spans 387 residues: Probable peptidoglycan glycosyltransferase FtsW (387 aa).

Transmembrane regions (helical) follow at residues 19–39, 61–81, 86–106, 118–138, 161–181, 199–219, 286–306, 320–340, and 352–372; these read LDFS…VMVA, ITFL…PMSV, SGLL…PGIG, LGPF…VYFA, VLLI…SVVI, FLLL…ASPY, FIGA…LVIL, YVVF…MGVA, and PFIS…ALVF.

This sequence belongs to the SEDS family. FtsW subfamily.

The protein resides in the cell inner membrane. It catalyses the reaction [GlcNAc-(1-&gt;4)-Mur2Ac(oyl-L-Ala-gamma-D-Glu-L-Lys-D-Ala-D-Ala)](n)-di-trans,octa-cis-undecaprenyl diphosphate + beta-D-GlcNAc-(1-&gt;4)-Mur2Ac(oyl-L-Ala-gamma-D-Glu-L-Lys-D-Ala-D-Ala)-di-trans,octa-cis-undecaprenyl diphosphate = [GlcNAc-(1-&gt;4)-Mur2Ac(oyl-L-Ala-gamma-D-Glu-L-Lys-D-Ala-D-Ala)](n+1)-di-trans,octa-cis-undecaprenyl diphosphate + di-trans,octa-cis-undecaprenyl diphosphate + H(+). Its pathway is cell wall biogenesis; peptidoglycan biosynthesis. Functionally, peptidoglycan polymerase that is essential for cell division. The sequence is that of Probable peptidoglycan glycosyltransferase FtsW from Saccharophagus degradans (strain 2-40 / ATCC 43961 / DSM 17024).